Here is a 93-residue protein sequence, read N- to C-terminus: Beta-defensin 128 (93 aa).

An N-terminal signal peptide occupies residues methionine 1–glycine 18. 3 disulfide bridges follow: cysteine 24-cysteine 52, cysteine 32-cysteine 46, and cysteine 36-cysteine 53.

This sequence belongs to the beta-defensin family.

It localises to the secreted. Its function is as follows. Has antibacterial activity. This is Beta-defensin 128 (DEFB128) from Pongo pygmaeus (Bornean orangutan).